The chain runs to 324 residues: Inhibitor of growth protein 1 homolog (324 aa).

The interval 120 to 237 (AEEEKKKKKS…SSRKQKSMAA (118 aa)) is disordered. Over residues 140–169 (SSTTSSSSSSSSSSLSLSSSTNNTSSLNSS) the composition is skewed to low complexity. Residues 170–186 (SGGGGGGSGGGGGGGGH) show a composition bias toward gly residues. A compositionally biased stretch (low complexity) spans 201–229 (SLTSSSSSGNINGMSSSSSSSSSSSSLSS). The PHD-type zinc finger occupies 271–320 (PTYCFCNRVSFGEMVGCENPDCKIEWFHFECVGLTSTPKGKWYCPDCTRI). Positions 274, 276, 287, 292, 298, 301, 314, and 317 each coordinate Zn(2+).

The protein belongs to the ING family. Interacts with H3K4me3 and to a lesser extent with H3K4me2.

It localises to the nucleus. In terms of biological role, involved in regulation of the growth and differentiation transition (GDT) process, probably by regulating gene expression via histone modification. This is Inhibitor of growth protein 1 homolog from Dictyostelium discoideum (Social amoeba).